Reading from the N-terminus, the 125-residue chain is MSTAVTEGIEVTVRSTFRPERSEPGRFLFSYTVRIANQGEVPAQLVSRRWIILDASGEREEVVGDGVVGQQPHLEPGEHFEYTSFCVLKTPHGSMRGTYRMVRDDGQAFDATIAPFPLVVPGSLN.

Residues 3 to 125 (TAVTEGIEVT…FPLVVPGSLN (123 aa)) form the ApaG domain.

This Anaeromyxobacter dehalogenans (strain 2CP-1 / ATCC BAA-258) protein is Protein ApaG.